A 657-amino-acid chain; its full sequence is N-acetylgalactosaminyltransferase 7 (657 aa).

The Cytoplasmic portion of the chain corresponds to 1–6 (MRLKIG). The helical; Signal-anchor for type II membrane protein transmembrane segment at 7-29 (FILRSLLVVGSFLGLVVLWSSLT) threads the bilayer. The Lumenal portion of the chain corresponds to 30–657 (PRPDDPSPLS…KWEMNNIHSV (628 aa)). Positions 31-66 (RPDDPSPLSRMREDRDVNDPMPNRGGNGLAPGEDRF) are disordered. Disulfide bonds link Cys-197/Cys-435, Cys-426/Cys-507, Cys-545/Cys-562, Cys-585/Cys-600, and Cys-625/Cys-640. Residues 206–317 (LLTSSVVIVF…VNWYAPLVAP (112 aa)) are catalytic subdomain A. Substrate contacts are provided by Asp-247 and Arg-277. Asp-301 and His-303 together coordinate Mn(2+). The segment at 381 to 443 (PYRSPAMAGG…PCSRVGHIYR (63 aa)) is catalytic subdomain B. Trp-412 provides a ligand contact to substrate. Position 440 (His-440) interacts with Mn(2+). Residue Arg-443 participates in substrate binding. Residues 532 to 652 (VDWGEIRGFE…SKTTQKWEMN (121 aa)) enclose the Ricin B-type lectin domain.

Belongs to the glycosyltransferase 2 family. GalNAc-T subfamily. Mn(2+) serves as cofactor.

The protein resides in the golgi apparatus membrane. It carries out the reaction L-seryl-[protein] + UDP-N-acetyl-alpha-D-galactosamine = a 3-O-[N-acetyl-alpha-D-galactosaminyl]-L-seryl-[protein] + UDP + H(+). The catalysed reaction is L-threonyl-[protein] + UDP-N-acetyl-alpha-D-galactosamine = a 3-O-[N-acetyl-alpha-D-galactosaminyl]-L-threonyl-[protein] + UDP + H(+). The protein operates within protein modification; protein glycosylation. Glycopeptide transferase involved in O-linked oligosaccharide biosynthesis, which catalyzes the transfer of an N-acetyl-D-galactosamine residue to an already glycosylated peptide. In contrast to other proteins of the family, it does not act as a peptide transferase that transfers GalNAc onto serine or threonine residue on the protein receptor, but instead requires the prior addition of a GalNAc on a peptide before adding additional GalNAc moieties. Some peptide transferase activity is however not excluded, considering that its appropriate peptide substrate may remain unidentified. The protein is N-acetylgalactosaminyltransferase 7 (GALNT7) of Pongo abelii (Sumatran orangutan).